The primary structure comprises 662 residues: UvrABC system protein B (662 aa).

Positions 25–412 (EGVRRGYRYQ…SEQVVEQLIR (388 aa)) constitute a Helicase ATP-binding domain. Position 38 to 45 (38 to 45 (GVTGSGKT)) interacts with ATP. A Beta-hairpin motif is present at residues 91–114 (YYDYYQPEAYVPETDTYIEKDASI). The Helicase C-terminal domain occupies 429 to 595 (QVDDLIAEIR…TVVKGVRDVI (167 aa)). One can recognise a UVR domain in the interval 620 to 655 (KSTIEQLEKEMRQAAIELQFEKAAKLRDMILELRKQ).

Belongs to the UvrB family. In terms of assembly, forms a heterotetramer with UvrA during the search for lesions. Interacts with UvrC in an incision complex.

The protein resides in the cytoplasm. Functionally, the UvrABC repair system catalyzes the recognition and processing of DNA lesions. A damage recognition complex composed of 2 UvrA and 2 UvrB subunits scans DNA for abnormalities. Upon binding of the UvrA(2)B(2) complex to a putative damaged site, the DNA wraps around one UvrB monomer. DNA wrap is dependent on ATP binding by UvrB and probably causes local melting of the DNA helix, facilitating insertion of UvrB beta-hairpin between the DNA strands. Then UvrB probes one DNA strand for the presence of a lesion. If a lesion is found the UvrA subunits dissociate and the UvrB-DNA preincision complex is formed. This complex is subsequently bound by UvrC and the second UvrB is released. If no lesion is found, the DNA wraps around the other UvrB subunit that will check the other stand for damage. This is UvrABC system protein B from Caldanaerobacter subterraneus subsp. tengcongensis (strain DSM 15242 / JCM 11007 / NBRC 100824 / MB4) (Thermoanaerobacter tengcongensis).